Reading from the N-terminus, the 414-residue chain is Methanesulfonate monooxygenase hydroxylase subunit alpha (414 aa).

A Rieske domain is found at 44-163; it reads WVPFRHESEL…CEVKFGGFVW (120 aa). Positions 86, 88, 115, and 118 each coordinate [2Fe-2S] cluster. H225 lines the Fe cation pocket.

This sequence belongs to the bacterial ring-hydroxylating dioxygenase alpha subunit family. In terms of assembly, the MSA monooxygenase system consists of 4 proteins: the 2 subunits of the hydroxylase component (MsmA and MsmB), a ferredoxin (MsmC) and a ferredoxin reductase (MsmD). The hydroxylase component consists of a 3 alpha (MsmA) and 3 beta (MsmB) subunits. Requires [2Fe-2S] cluster as cofactor. It depends on Fe cation as a cofactor.

The protein localises to the cytoplasm. The enzyme catalyses methanesulfonate + NADH + O2 = sulfite + formaldehyde + NAD(+) + H2O. With respect to regulation, MSAMO is inhibited by metal chelators (such as bathophenanthroline, bathocuprione, neocuprione, alpha-alpha-dipyridil and sodium EDTA) and by sodium azide, sodium arsenate and potassium cyanide. Methanesulfonate monooxygenase (MSAMO) mediates the primary degradation of methanesulfonic acid (MSA) to produce formaldehyd and inorganic sulfite by initial hydroxylation of the carbon atom prior to spontaneous cleavage of the unstable hydroxymethanesulfonic acid. MSAMO has a restricted substrate range that includes only the short-chain aliphatic sulfonates (methane- to butanesulfonate) and excludes all larger molecules, such as arylsulfonates and aromatic sulfonates. All MSAMO components are required for enzyme activity. This Methylosulfonomonas methylovora protein is Methanesulfonate monooxygenase hydroxylase subunit alpha.